Consider the following 270-residue polypeptide: uncharacterized protein (270 aa).

This is an uncharacterized protein from Aquifex aeolicus (strain VF5).